Here is an 86-residue protein sequence, read N- to C-terminus: Centromere protein W (86 aa).

It belongs to the CENP-W/WIP1 family. In terms of assembly, heterodimer with CENPT; this dimer coassembles with CENPS-CENPX heterodimers at centromeres to form the tetrameric CENP-T-W-S-X complex, which is a subcomplex of the large constitutive centromere-associated network (CCAN, also known as the interphase centromere complex or ICEN). Interacts with NPM1.

Its subcellular location is the nucleus. The protein localises to the chromosome. The protein resides in the centromere. It localises to the kinetochore. It is found in the nucleus matrix. Its subcellular location is the nucleolus. Functionally, component of the CENPA-NAC (nucleosome-associated) complex, a complex that plays a central role in assembly of kinetochore proteins, mitotic progression and chromosome segregation. The CENPA-NAC complex recruits the CENPA-CAD (nucleosome distal) complex and may be involved in incorporation of newly synthesized CENPA into centromeres. Part of a nucleosome-associated complex that binds specifically to histone H3-containing nucleosomes at the centromere, as opposed to nucleosomes containing CENPA. Component of the heterotetrameric CENP-T-W-S-X complex that binds and supercoils DNA, and plays an important role in kinetochore assembly. CENPW has a fundamental role in kinetochore assembly and function. It is one of the inner kinetochore proteins, with most further proteins binding downstream. Required for normal chromosome organization and normal progress through mitosis. The protein is Centromere protein W (Cenpw) of Mus musculus (Mouse).